The following is a 331-amino-acid chain: XylDLEGF operon transcriptional activator 1 (331 aa).

One can recognise an HTH araC/xylS-type domain in the interval 214–315 (ERVVQFIEEN…GELPSDTLRR (102 aa)). 2 consecutive DNA-binding regions (H-T-H motif) follow at residues 231–252 (ERLA…EKHA) and 282–305 (VTEM…RSTF).

The protein localises to the cytoplasm. Functionally, regulatory protein of the TOL plasmid xyl operons. XylS activates the xylXYZLTEGFJQKIH operon required for the degradation of toluene, m-xylene and p-xylene. The chain is XylDLEGF operon transcriptional activator 1 (xylS1) from Pseudomonas putida (Arthrobacter siderocapsulatus).